A 152-amino-acid polypeptide reads, in one-letter code: Membrane-spanning 4-domains subfamily A member 13 (152 aa).

Transmembrane regions (helical) follow at residues 1 to 21 (MIGI…MGQI), 32 to 52 (TYKT…VFLI), 66 to 86 (TLII…LTII), and 111 to 131 (ILLF…IYSC).

Belongs to the MS4A family.

Its subcellular location is the membrane. In terms of biological role, may be involved in signal transduction as a component of a multimeric receptor complex. This Homo sapiens (Human) protein is Membrane-spanning 4-domains subfamily A member 13 (MS4A13).